The sequence spans 72 residues: Protein CYSTEINE-RICH TRANSMEMBRANE MODULE 1 (72 aa).

Polar residues predominate over residues 1 to 11 (MSQYDHNQSAG). Positions 1–46 (MSQYDHNQSAGANPPPPMSTCTSPPPPIGYPTNQPSHGSVAQGKVE) are disordered. Residues 13–29 (NPPPPMSTCTSPPPPIG) show a composition bias toward pro residues. Residues 49 to 65 (SKGDGFFKGCLAAMCCC) traverse the membrane as a helical segment.

This sequence belongs to the CYSTM1 family. Heterodimers. Binds weakly to CYSTM7 and WIH1/CYSTM13. Mostly expressed in roots, flowers and siliques and, to a lower extent, in stems and leaves.

The protein resides in the cell membrane. The protein localises to the nucleus. In terms of biological role, may be involved in aluminium (Al) tolerance. Involved in resistance to abiotic stress. The chain is Protein CYSTEINE-RICH TRANSMEMBRANE MODULE 1 from Arabidopsis thaliana (Mouse-ear cress).